Reading from the N-terminus, the 496-residue chain is Cytochrome P450 71D179 (496 aa).

The chain crosses the membrane as a helical; Signal-anchor for type II membrane protein span at residues 1–21 (MDISISWVVIIVSVLSYLILM). C435 lines the heme pocket.

Belongs to the cytochrome P450 family. Requires heme as cofactor.

It is found in the membrane. The protein operates within secondary metabolite biosynthesis; terpenoid biosynthesis. Involved in the biosynthesis of phenolic monoterpenes natural products thymol and carvacrol which have a broad range of biological activities acting as antimicrobial compounds, insecticides, antioxidants and pharmaceutical agents. Catalyzes probably the C3-hydroxylation of gamma-terpinene to produce thymol. This is Cytochrome P450 71D179 from Thymus vulgaris (Thyme).